The following is a 201-amino-acid chain: Holliday junction branch migration complex subunit RuvA (201 aa).

The domain I stretch occupies residues methionine 1–valine 63. The interval glutamate 64–serine 142 is domain II. The segment at glycine 143–glutamate 153 is flexible linker. Residues glutamate 153 to arginine 201 form a domain III region.

The protein belongs to the RuvA family. Homotetramer. Forms an RuvA(8)-RuvB(12)-Holliday junction (HJ) complex. HJ DNA is sandwiched between 2 RuvA tetramers; dsDNA enters through RuvA and exits via RuvB. An RuvB hexamer assembles on each DNA strand where it exits the tetramer. Each RuvB hexamer is contacted by two RuvA subunits (via domain III) on 2 adjacent RuvB subunits; this complex drives branch migration. In the full resolvosome a probable DNA-RuvA(4)-RuvB(12)-RuvC(2) complex forms which resolves the HJ.

The protein resides in the cytoplasm. Functionally, the RuvA-RuvB-RuvC complex processes Holliday junction (HJ) DNA during genetic recombination and DNA repair, while the RuvA-RuvB complex plays an important role in the rescue of blocked DNA replication forks via replication fork reversal (RFR). RuvA specifically binds to HJ cruciform DNA, conferring on it an open structure. The RuvB hexamer acts as an ATP-dependent pump, pulling dsDNA into and through the RuvAB complex. HJ branch migration allows RuvC to scan DNA until it finds its consensus sequence, where it cleaves and resolves the cruciform DNA. This chain is Holliday junction branch migration complex subunit RuvA, found in Cutibacterium acnes (strain DSM 16379 / KPA171202) (Propionibacterium acnes).